The primary structure comprises 300 residues: Recombination-promoting nuclease RpnC (300 aa).

This sequence belongs to the Rpn/YhgA-like nuclease family.

In terms of biological role, a low activity DNA endonuclease yielding 3'-hydroxyl ends. Upon expression enhances RecA-independent DNA recombination 2.9-fold, concomitantly reducing viability by 59% and inducing DNA damage as measured by induction of the SOS repair response. The sequence is that of Recombination-promoting nuclease RpnC from Escherichia coli (strain K12).